The chain runs to 270 residues: Diaminopimelate epimerase (270 aa).

3 residues coordinate substrate: asparagine 15, glutamine 49, and asparagine 66. Cysteine 75 (proton donor) is an active-site residue. Substrate contacts are provided by residues 76–77, asparagine 155, asparagine 187, and 204–205; these read GN and ER. The active-site Proton acceptor is the cysteine 213. 214-215 lines the substrate pocket; it reads GS.

Belongs to the diaminopimelate epimerase family. As to quaternary structure, homodimer.

It is found in the cytoplasm. The enzyme catalyses (2S,6S)-2,6-diaminopimelate = meso-2,6-diaminopimelate. It functions in the pathway amino-acid biosynthesis; L-lysine biosynthesis via DAP pathway; DL-2,6-diaminopimelate from LL-2,6-diaminopimelate: step 1/1. Its function is as follows. Catalyzes the stereoinversion of LL-2,6-diaminopimelate (L,L-DAP) to meso-diaminopimelate (meso-DAP), a precursor of L-lysine and an essential component of the bacterial peptidoglycan. The polypeptide is Diaminopimelate epimerase (Rickettsia africae (strain ESF-5)).